The following is a 483-amino-acid chain: V-type proton ATPase subunit B 2 (483 aa).

Belongs to the ATPase alpha/beta chains family. In terms of assembly, V-ATPase is a heteromultimeric enzyme composed of a peripheral catalytic V1 complex (main components: subunits A, B, C, D, E, and F) attached to an integral membrane V0 proton pore complex (main component: the proteolipid protein).

Its function is as follows. Non-catalytic subunit of the peripheral V1 complex of vacuolar ATPase. V-ATPase is responsible for acidifying a variety of intracellular compartments in eukaryotic cells. This is V-type proton ATPase subunit B 2 from Hordeum vulgare (Barley).